Consider the following 105-residue polypeptide: Large ribosomal subunit protein uL24 (105 aa).

It belongs to the universal ribosomal protein uL24 family. In terms of assembly, part of the 50S ribosomal subunit.

In terms of biological role, one of two assembly initiator proteins, it binds directly to the 5'-end of the 23S rRNA, where it nucleates assembly of the 50S subunit. Functionally, one of the proteins that surrounds the polypeptide exit tunnel on the outside of the subunit. This Staphylococcus epidermidis (strain ATCC 35984 / DSM 28319 / BCRC 17069 / CCUG 31568 / BM 3577 / RP62A) protein is Large ribosomal subunit protein uL24.